The chain runs to 437 residues: Bystin (437 aa).

The disordered stretch occupies residues 1-105 (MPKFKAARGV…DGSDDEDEEW (105 aa)). Arg-40 bears the Omega-N-methylarginine mark. A Phosphoserine modification is found at Ser-55. A compositionally biased stretch (basic and acidic residues) spans 71–87 (AEHGTGDKPAAPRERTT). At Ser-98 the chain carries Phosphoserine. Thr-156 bears the Phosphothreonine mark. Ser-167 and Ser-414 each carry phosphoserine.

The protein belongs to the bystin family. In terms of assembly, binds trophinin, tastin and cytokeratins. Found in the placenta from the sixth week of pregnancy. Was localized in the cytoplasm of the syncytiotrophoblast in the chorionic villi and in endometrial decidual cells at the uteroplacental interface. After week 10, the level decreased and then disappeared from placental villi.

The protein localises to the cytoplasm. It is found in the nucleus. The protein resides in the nucleolus. Required for processing of 20S pre-rRNA precursor and biogenesis of 40S ribosomal subunits. May be required for trophinin-dependent regulation of cell adhesion during implantation of human embryos. The sequence is that of Bystin from Homo sapiens (Human).